The primary structure comprises 512 residues: MKKQHDTIIVLDFGSQYNQLIARRIREFGVYSELHPHTITAEEIKAMNPKGIIFSGGPNSVYGENAFHCDEKIFELGLPIFGICYGMQLMTKHFGGKVERANHREYGKAVLKVENESKLYTNLPEEQVVWMSHGDLVTGLPEGFVVDATSESCPIAGMSNEEKQLYGVQFHPEVRHSEHGNDLIKNFVFGVCGCSEGWNMENFIEVELEKIRETVGDKKVLCALSGGVDSSVVAVLIHKAIGDQLTCIFVDHGLLRKGEAEGVMKTFSEGFHMNVIKIDARERFMKKLKGVEDPEQKRKIIGNEFIYVFDDEAAKLEGIDFLAQGTLYTDIIESGTATAQTIKSHHNVGGLPEDMQFKLIEPLNTLFKDEVRVLGSELGIPDEIVWRQPFPGPGLGIRVLGEITEEKLEIVRESDAILREEIQKAGLDREIWQYFTALPGMRSVGVMGDERTYDYTVGIRAVTSIDGMTADWARIPWDVLEKISVRIVNEVKHVNRVVYDITSKPPATIEWE.

The region spanning 7–197 (TIIVLDFGSQ…VFGVCGCSEG (191 aa)) is the Glutamine amidotransferase type-1 domain. The active-site Nucleophile is cysteine 84. Active-site residues include histidine 171 and glutamate 173. The GMPS ATP-PPase domain maps to 198 to 387 (WNMENFIEVE…LGIPDEIVWR (190 aa)). Residue 225–231 (SGGVDSS) participates in ATP binding.

Homodimer.

The catalysed reaction is XMP + L-glutamine + ATP + H2O = GMP + L-glutamate + AMP + diphosphate + 2 H(+). Its pathway is purine metabolism; GMP biosynthesis; GMP from XMP (L-Gln route): step 1/1. Catalyzes the synthesis of GMP from XMP. The protein is GMP synthase [glutamine-hydrolyzing] of Bacillus cytotoxicus (strain DSM 22905 / CIP 110041 / 391-98 / NVH 391-98).